The sequence spans 214 residues: Alpha-S1-casein (214 aa).

The first 15 residues, 1–15 (MKLLILTCLVAVALA), serve as a signal peptide directing secretion. 6 positions are modified to phosphoserine: Ser63, Ser79, Ser81, Ser82, Ser83, and Ser90. Repeats lie at residues 85–99 (EIVP…IQKE) and 125–140 (EIVP…SMKE).

This sequence belongs to the alpha-casein family. As to expression, mammary gland specific. Secreted in milk.

The protein resides in the secreted. Functionally, important role in the capacity of milk to transport calcium phosphate. The chain is Alpha-S1-casein (CSN1S1) from Bubalus bubalis (Domestic water buffalo).